The following is a 288-amino-acid chain: NH(3)-dependent NAD(+) synthetase (288 aa).

Residue 46 to 53 coordinates ATP; it reads GISGGQDS. A Mg(2+)-binding site is contributed by Asp52. Arg153 serves as a coordination point for deamido-NAD(+). Thr173 is an ATP binding site. Position 178 (Glu178) interacts with Mg(2+). Deamido-NAD(+) contacts are provided by Lys186 and Asp193. Lys202 and Thr224 together coordinate ATP. 273–274 contributes to the deamido-NAD(+) binding site; it reads HK.

It belongs to the NAD synthetase family. Homodimer.

It carries out the reaction deamido-NAD(+) + NH4(+) + ATP = AMP + diphosphate + NAD(+) + H(+). The protein operates within cofactor biosynthesis; NAD(+) biosynthesis; NAD(+) from deamido-NAD(+) (ammonia route): step 1/1. In terms of biological role, catalyzes the ATP-dependent amidation of deamido-NAD to form NAD. Uses ammonia as a nitrogen source. This is NH(3)-dependent NAD(+) synthetase from Deinococcus geothermalis (strain DSM 11300 / CIP 105573 / AG-3a).